We begin with the raw amino-acid sequence, 137 residues long: Competence protein D (137 aa).

Functionally, involved in transformation (genetic competence for DNA uptake). This chain is Competence protein D (comD), found in Haemophilus influenzae (strain ATCC 51907 / DSM 11121 / KW20 / Rd).